Consider the following 243-residue polypeptide: Derlin-1.2 (243 aa).

Over 1 to 20 (MSSPAEYYKSLPPISKAYGT) the chain is Cytoplasmic. Residues 21 to 41 (LCFFTTVLVRLHILNPLFLYL) form a helical membrane-spanning segment. The Lumenal portion of the chain corresponds to 42-54 (YYPRVFKKFEVWR). Residues 55 to 75 (IFTSFFFLGPFSINFGIRLLM) form a helical membrane-spanning segment. The Cytoplasmic portion of the chain corresponds to 76 to 94 (IARYGVMLEKGAFDKRTAD). A helical membrane pass occupies residues 95–115 (FLWMMIFGAISLLVLSVIPQL). Over 116–155 (NTYVLGLPMVSMLVYVWSRENPNAQINIYGILQLKAFYLP) the chain is Lumenal. The helical transmembrane segment at 156–176 (WVMLLLDVIFGSPLMPGLLGI) threads the bilayer. At 177-243 (MVGHLYYYFA…FRGRSYRLNQ (67 aa)) the chain is on the cytoplasmic side.

This sequence belongs to the derlin family. In terms of tissue distribution, expressed in roots and endosperm.

It localises to the endoplasmic reticulum membrane. Its function is as follows. May be involved in the degradation process of specific misfolded endoplasmic reticulum (ER) luminal proteins. This chain is Derlin-1.2 (DER1.2), found in Zea mays (Maize).